We begin with the raw amino-acid sequence, 280 residues long: Digeranylgeranylglyceryl phosphate synthase (280 aa).

Transmembrane regions (helical) follow at residues 4–24 (AAYL…AGIL), 27–47 (IIAT…VLTI), 83–103 (LMYA…FTPL), 104–124 (PLAG…SFLK), 128–148 (LIGN…GGAI), 150–170 (GTQG…VMLA), 199–219 (ATIY…LLLY), 222–242 (WGAF…FGAI), and 260–280 (KILK…AVLL).

Belongs to the UbiA prenyltransferase family. DGGGP synthase subfamily. Requires Mg(2+) as cofactor.

It localises to the cell membrane. The catalysed reaction is sn-3-O-(geranylgeranyl)glycerol 1-phosphate + (2E,6E,10E)-geranylgeranyl diphosphate = 2,3-bis-O-(geranylgeranyl)-sn-glycerol 1-phosphate + diphosphate. Its pathway is membrane lipid metabolism; glycerophospholipid metabolism. Functionally, prenyltransferase that catalyzes the transfer of the geranylgeranyl moiety of geranylgeranyl diphosphate (GGPP) to the C2 hydroxyl of (S)-3-O-geranylgeranylglyceryl phosphate (GGGP). This reaction is the second ether-bond-formation step in the biosynthesis of archaeal membrane lipids. In Methanospirillum hungatei JF-1 (strain ATCC 27890 / DSM 864 / NBRC 100397 / JF-1), this protein is Digeranylgeranylglyceryl phosphate synthase.